The chain runs to 513 residues: Ribonuclease Y (513 aa).

Residues 6-26 (YIIIAVVIIIICVILGLYVVD) traverse the membrane as a helical segment. Residues 35–59 (EASKEARRLKEEAERDAEAKKKEAI) form a disordered region. Residues 203–288 (TVHVVNLPND…EMVEKAKKEV (86 aa)) form the KH domain. The 94-residue stretch at 329 to 422 (VLKHSIEVSH…VQAADAISAA (94 aa)) folds into the HD domain.

This sequence belongs to the RNase Y family.

It localises to the cell membrane. Its function is as follows. Endoribonuclease that initiates mRNA decay. The chain is Ribonuclease Y from Clostridium botulinum (strain Okra / Type B1).